The sequence spans 467 residues: Hydroxyacid-oxoacid transhydrogenase, mitochondrial (467 aa).

The residue at position 445 (lysine 445) is an N6-acetyllysine. Serine 452 is modified (phosphoserine).

Belongs to the iron-containing alcohol dehydrogenase family. Hydroxyacid-oxoacid transhydrogenase subfamily. In terms of tissue distribution, only expressed in adult liver.

The protein resides in the mitochondrion. It carries out the reaction (S)-3-hydroxybutanoate + 2-oxoglutarate = (R)-2-hydroxyglutarate + acetoacetate. The catalysed reaction is 4-hydroxybutanoate + 2-oxoglutarate = (R)-2-hydroxyglutarate + succinate semialdehyde. Functionally, catalyzes the cofactor-independent reversible oxidation of gamma-hydroxybutyrate (GHB) to succinic semialdehyde (SSA) coupled to reduction of 2-ketoglutarate (2-KG) to D-2-hydroxyglutarate (D-2-HG). D,L-3-hydroxyisobutyrate and L-3-hydroxybutyrate (L-3-OHB) are also substrates for HOT with 10-fold lower activities. The protein is Hydroxyacid-oxoacid transhydrogenase, mitochondrial (ADHFE1) of Homo sapiens (Human).